Here is a 370-residue protein sequence, read N- to C-terminus: Mitochondrial carrier protein SCaMC-3L (370 aa).

3 Solcar repeats span residues 90 to 176 (EALW…CKNY), 184 to 269 (PPFQ…LQCF), and 280 to 367 (PSGL…MKKT). Transmembrane regions (helical) follow at residues 96-113 (LLSG…TAPL), 151-170 (GNGI…FSVF), 194-207 (SLAV…INPM), 245-263 (YLPN…LAVY), 282-306 (GLVS…LTLV), and 342-361 (GMTP…YVVY).

This sequence belongs to the mitochondrial carrier (TC 2.A.29) family.

It localises to the mitochondrion inner membrane. It carries out the reaction Mg(2+)(out) + phosphate(in) + ATP(out) = Mg(2+)(in) + phosphate(out) + ATP(in). The enzyme catalyses ADP(out) + phosphate(in) + H(+)(out) = ADP(in) + phosphate(out) + H(+)(in). Its function is as follows. Calcium-independent ATP-Mg/Pi exchanger that catalyzes the electroneutral exchange of Mg-ATP or free ADP against an hydrogenphosphate and participates in the net transport of adenine nucleotides across the mitochondria inner membrane. In Homo sapiens (Human), this protein is Mitochondrial carrier protein SCaMC-3L.